The primary structure comprises 93 residues: Large ribosomal subunit protein bL31 (93 aa).

Positions 68-93 (GSADAAADEKKTDAKNNNKDNTSKED) are disordered. Residues 74 to 93 (ADEKKTDAKNNNKDNTSKED) are compositionally biased toward basic and acidic residues.

Belongs to the bacterial ribosomal protein bL31 family. Type A subfamily. As to quaternary structure, part of the 50S ribosomal subunit.

Binds the 23S rRNA. The polypeptide is Large ribosomal subunit protein bL31 (Prochlorococcus marinus (strain MIT 9303)).